A 443-amino-acid chain; its full sequence is Clustered-asparagine-rich protein (443 aa).

In terms of domain architecture, RRM 1 spans 16–106 (TKLHIQNIPP…RNIDAKFAVP (91 aa)). A disordered region spans residues 253–279 (NHLNNNNNNINNNNNNNNNNNNNNNVM). A compositionally biased stretch (low complexity) spans 256–277 (NNNNNNINNNNNNNNNNNNNNN). Residues 342 to 435 (SSITIMKKQN…KYLKVQLKKG (94 aa)) form the RRM 2 domain.

The sequence is that of Clustered-asparagine-rich protein from Plasmodium falciparum.